The sequence spans 265 residues: GTP cyclohydrolase FolE2 (265 aa).

Belongs to the GTP cyclohydrolase IV family.

The catalysed reaction is GTP + H2O = 7,8-dihydroneopterin 3'-triphosphate + formate + H(+). It participates in cofactor biosynthesis; 7,8-dihydroneopterin triphosphate biosynthesis; 7,8-dihydroneopterin triphosphate from GTP: step 1/1. In terms of biological role, converts GTP to 7,8-dihydroneopterin triphosphate. This Bordetella petrii (strain ATCC BAA-461 / DSM 12804 / CCUG 43448) protein is GTP cyclohydrolase FolE2.